A 1370-amino-acid chain; its full sequence is Reverse gyrase 1 (1370 aa).

An RG N-terminal-type zinc finger spans residues 6–47 (AASRGVYRYLCPNCGGPNSEERLSRGLPCPRCLPRLPRKGVS). 4 residues coordinate Zn(2+): cysteine 16, cysteine 19, cysteine 34, and cysteine 37. ATP-binding positions include glutamine 95 and 112-119 (APTGVGKT). One can recognise a Helicase ATP-binding domain in the interval 99 to 287 (AKRLARGDSF…RKKLLEVKRR (189 aa)). The DEAD box signature appears at 220-223 (DDVD). The topoisomerase I stretch occupies residues 643-1370 (ELVRTALLVV…VSRVWGAGVG (728 aa)). The Toprim domain maps to 647–825 (TALLVVESPN…DIKRLEFHEV (179 aa)). Residue glutamate 653 participates in Mg(2+) binding. The segment at 744 to 772 (IKRCLDCGYQFVDEASRCPRCGSELIRNS) adopts an RG C-terminal-type zinc-finger fold. Zn(2+) contacts are provided by cysteine 747, cysteine 750, cysteine 761, and cysteine 764. Mg(2+) is bound at residue aspartate 794. One can recognise a Topo IA-type catalytic domain in the interval 841 to 1323 (DDNLVDAQVV…SVFNEISDLA (483 aa)). The active-site O-(5'-phospho-DNA)-tyrosine intermediate is tyrosine 1028.

It in the N-terminal section; belongs to the DEAD box helicase family. DDVD subfamily. The protein in the C-terminal section; belongs to the type IA topoisomerase family. As to quaternary structure, monomer. Zn(2+) is required as a cofactor. Mg(2+) serves as cofactor.

It is found in the cytoplasm. The catalysed reaction is ATP + H2O = ADP + phosphate + H(+). Modifies the topological state of DNA by introducing positive supercoils in an ATP-dependent process, increasing the linking number in steps of +1. Binds to single-stranded DNA, transiently cleaves and then rejoins the ends, introducing a positive supercoil in the process. The scissile phosphodiester is attacked by the catalytic tyrosine of the enzyme, resulting in the formation of a DNA-(5'-phosphotyrosyl)-enzyme intermediate. Probably involved in rewinding DNA strands in regions of the chromosome that have opened up to allow replication, transcription, DNA repair and/or for DNA protection. The sequence is that of Reverse gyrase 1 from Aeropyrum pernix (strain ATCC 700893 / DSM 11879 / JCM 9820 / NBRC 100138 / K1).